The primary structure comprises 181 residues: Germinal center-associated signaling and motility protein (181 aa).

S102 carries the post-translational modification Phosphoserine. Residues 117–128 (AERHKESSRGTE) show a composition bias toward basic and acidic residues. Residues 117-181 (AERHKESSRG…PYETHFSYPQ (65 aa)) are disordered. Y150 carries the phosphotyrosine modification.

As to quaternary structure, interacts with ACTB and MYH2; the interaction with MYH2 is increased by IL6-induced phosphorylation. Interacts (via C-terminus) with ARHGEF11 (via DH domain). Interacts with ARHGEF12. Interacts with SYK; the interaction increases after B-cell receptor stimulation, resulting in enhanced SYK autophosphorylation and activity. Post-translationally, phosphorylation on tyrosine residues can be induced by IL6. Phosphorylation is mediated by LYN. Targeted by the ubiquitin E3 ligase subunit FBXO10 to mediate its ubiquitination and degradation. Highly expressed in normal germinal center (GC) B-cells. Expressed in spleen and, to a lesser extent, bone marrow.

The protein localises to the cytoplasm. Its subcellular location is the cell membrane. In terms of biological role, involved in the negative regulation of lymphocyte motility. It mediates the migration-inhibitory effects of IL6. Serves as a positive regulator of the RhoA signaling pathway. Enhancement of RhoA activation results in inhibition of lymphocyte and lymphoma cell motility by activation of its downstream effector ROCK. Is a regulator of B-cell receptor signaling, that acts through SYK kinase activation. In Mus musculus (Mouse), this protein is Germinal center-associated signaling and motility protein (Gcsam).